The primary structure comprises 123 residues: Immunoglobulin lambda variable 5-37 (123 aa).

Residues 1–19 (MAWTPLLLLLLSHCTGSLS) form the signal peptide. The tract at residues 20 to 44 (QPVLTQPPSSSASPGESARLTCTLP) is framework-1. The 103-residue stretch at 21 to 123 (PVLTQPPSSS…YCMIWPSNAS (103 aa)) folds into the Ig-like domain. An intrachain disulfide couples Cys-41 to Cys-115. Residues 45–53 (SDINVGSYN) form a complementarity-determining-1 region. The framework-2 stretch occupies residues 54-70 (IYWYQQKPGSPPRYLLY). The tract at residues 71–77 (YYSDSDK) is complementarity-determining-2. The tract at residues 78-115 (GQGSGVPSRFSGSKDASANTGILLISGLQSEDEADYYC) is framework-3. Positions 116 to 123 (MIWPSNAS) are complementarity-determining-3.

As to quaternary structure, immunoglobulins are composed of two identical heavy chains and two identical light chains; disulfide-linked.

The protein localises to the secreted. Its subcellular location is the cell membrane. Functionally, v region of the variable domain of immunoglobulin light chains that participates in the antigen recognition. Immunoglobulins, also known as antibodies, are membrane-bound or secreted glycoproteins produced by B lymphocytes. In the recognition phase of humoral immunity, the membrane-bound immunoglobulins serve as receptors which, upon binding of a specific antigen, trigger the clonal expansion and differentiation of B lymphocytes into immunoglobulins-secreting plasma cells. Secreted immunoglobulins mediate the effector phase of humoral immunity, which results in the elimination of bound antigens. The antigen binding site is formed by the variable domain of one heavy chain, together with that of its associated light chain. Thus, each immunoglobulin has two antigen binding sites with remarkable affinity for a particular antigen. The variable domains are assembled by a process called V-(D)-J rearrangement and can then be subjected to somatic hypermutations which, after exposure to antigen and selection, allow affinity maturation for a particular antigen. In Homo sapiens (Human), this protein is Immunoglobulin lambda variable 5-37.